Here is a 344-residue protein sequence, read N- to C-terminus: Ribosome biogenesis protein RPF2 (344 aa).

The Brix domain occupies 28 to 243 (KQALFIPGQS…IGRIHTPSPD (216 aa)). Serine 73 carries the phosphoserine modification. The tract at residues 291-344 (KGLKSKFDQGTEEGDGEVDEDYEDEASYSDDGQEYEEEFVSATDIEPSAKRQKK) is disordered. A compositionally biased stretch (acidic residues) spans 300 to 329 (GTEEGDGEVDEDYEDEASYSDDGQEYEEEF).

Belongs to the RPF2 family. As to quaternary structure, part of a complex that includes BRX1, RPF1, RPF2 and SSF1 or SSF2. Component of a hexameric 5S RNP precursor complex, composed of 5S RNA, RRS1, RPF2, RPL5, RPL11A/RPL11B and SYO1; this complex acts as a precursor for ribosome assembly.

The protein resides in the nucleus. It is found in the nucleolus. In terms of biological role, required for biogenesis of the 60S ribosomal subunit. This is Ribosome biogenesis protein RPF2 (RPF2) from Saccharomyces cerevisiae (strain ATCC 204508 / S288c) (Baker's yeast).